The chain runs to 207 residues: Large ribosomal subunit protein uL4 (207 aa).

Positions 49 to 78 (HAVKNRSAVRGGGKKPWRQKGTGRARQGSI) are disordered. Over residues 60–71 (GGKKPWRQKGTG) the composition is skewed to basic residues.

It belongs to the universal ribosomal protein uL4 family. Part of the 50S ribosomal subunit.

Its function is as follows. One of the primary rRNA binding proteins, this protein initially binds near the 5'-end of the 23S rRNA. It is important during the early stages of 50S assembly. It makes multiple contacts with different domains of the 23S rRNA in the assembled 50S subunit and ribosome. Forms part of the polypeptide exit tunnel. The chain is Large ribosomal subunit protein uL4 from Ligilactobacillus salivarius (strain UCC118) (Lactobacillus salivarius).